A 576-amino-acid polypeptide reads, in one-letter code: Arginine--tRNA ligase (576 aa).

Positions 132–142 (ANPTGPMHIGH) match the 'HIGH' region motif.

This sequence belongs to the class-I aminoacyl-tRNA synthetase family. Monomer.

The protein localises to the cytoplasm. The enzyme catalyses tRNA(Arg) + L-arginine + ATP = L-arginyl-tRNA(Arg) + AMP + diphosphate. The protein is Arginine--tRNA ligase of Ehrlichia ruminantium (strain Gardel).